Reading from the N-terminus, the 555-residue chain is Alpha-1,2-mannosyltransferase ALG9 (555 aa).

Residues 1–7 (MNCKAVT) lie on the Cytoplasmic side of the membrane. The chain crosses the membrane as a helical span at residues 8–28 (ISLLLLLFLTRVYIQPTFSLI). The Lumenal portion of the chain corresponds to 29-62 (SDCDETFNYWEPLNLLVRGFGKQTWEYSPEYSIR). The chain crosses the membrane as a helical span at residues 63–83 (SWAFLLPFYCILYPVNKFTDL). At 84 to 86 (ESH) the chain is on the cytoplasmic side. A helical membrane pass occupies residues 87-107 (WNFFITRACLGFFSFIMEFKL). Residues 108–113 (HREIAG) are Lumenal-facing. The helical transmembrane segment at 114-134 (SLALQIANIWIIFQLFNPGWF) threads the bilayer. Topologically, residues 135-176 (HASVELLPSAVAMLLYVGATRHSLRYLSTGSTSNFTKSLAYN) are cytoplasmic. The helical transmembrane segment at 177–197 (FLASILGWPFVLILSLPLCLH) threads the bilayer. The Lumenal portion of the chain corresponds to 198–213 (YLFNHRIISTIRTAFD). Residues 214 to 234 (CCLIFSLTAFAVIVTDSIFYG) traverse the membrane as a helical segment. Topologically, residues 235–268 (KLAPVSWNILFYNVINASEESGPNIFGVEPWYYY) are cytoplasmic. The chain crosses the membrane as a helical span at residues 269-289 (PLNLLLNFPLPVLVLAILGIF). The Lumenal segment spans residues 290-316 (HLRLWPLWASLFTWIAVFTQQPHKEER). A helical transmembrane segment spans residues 317 to 337 (FLYPIYGLITLSASIAFYKVL). At 338–349 (NLFNRKPILKKG) the chain is on the cytoplasmic side. Residues 350-370 (IKLSVLLIVAGQAMSRIVALV) form a helical membrane-spanning segment. The Lumenal portion of the chain corresponds to 371–555 (NNYTAPIAVY…LFEKPTETTN (185 aa)).

This sequence belongs to the glycosyltransferase 22 family.

It localises to the endoplasmic reticulum membrane. The enzyme catalyses an alpha-D-Man-(1-&gt;2)-alpha-D-Man-(1-&gt;2)-alpha-D-Man-(1-&gt;3)-[alpha-D-Man-(1-&gt;3)-alpha-D-Man-(1-&gt;6)]-beta-D-Man-(1-&gt;4)-beta-D-GlcNAc-(1-&gt;4)-alpha-D-GlcNAc-diphospho-di-trans,poly-cis-dolichol + a di-trans,poly-cis-dolichyl beta-D-mannosyl phosphate = an alpha-D-Man-(1-&gt;2)-alpha-D-Man-(1-&gt;2)-alpha-D-Man-(1-&gt;3)-[alpha-D-Man-(1-&gt;2)-alpha-D-Man-(1-&gt;3)-alpha-D-Man-(1-&gt;6)]-beta-D-Man-(1-&gt;4)-beta-D-GlcNAc-(1-&gt;4)-alpha-D-GlcNAc-diphospho-di-trans,poly-cis-dolichol + a di-trans,poly-cis-dolichyl phosphate + H(+). It catalyses the reaction an alpha-D-Man-(1-&gt;2)-alpha-D-Man-(1-&gt;2)-alpha-D-Man-(1-&gt;3)-[alpha-D-Man-(1-&gt;2)-alpha-D-Man-(1-&gt;3)-[alpha-D-Man-(1-&gt;6)]-alpha-D-Man-(1-&gt;6)]-beta-D-Man-(1-&gt;4)-beta-D-GlcNAc-(1-&gt;4)-alpha-D-GlcNAc-diphospho-di-trans,poly-cis-dolichol + a di-trans,poly-cis-dolichyl beta-D-mannosyl phosphate = an alpha-D-Man-(1-&gt;2)-alpha-D-Man-(1-&gt;2)-alpha-D-Man-(1-&gt;3)-[alpha-D-Man-(1-&gt;2)-alpha-D-Man-(1-&gt;3)-[alpha-D-Man-(1-&gt;2)-alpha-D-Man-(1-&gt;6)]-alpha-D-Man-(1-&gt;6)]-beta-D-Man-(1-&gt;4)-beta-D-GlcNAc-(1-&gt;4)-alpha-D-GlcNAc-diphospho-di-trans,poly-cis-dolichol + a di-trans,poly-cis-dolichyl phosphate + H(+). Its pathway is protein modification; protein glycosylation. Functionally, mannosyltransferase that operates in the biosynthetic pathway of dolichol-linked oligosaccharides, the glycan precursors employed in protein asparagine (N)-glycosylation. The assembly of dolichol-linked oligosaccharides begins on the cytosolic side of the endoplasmic reticulum membrane and finishes in its lumen. The sequential addition of sugars to dolichol pyrophosphate produces dolichol-linked oligosaccharides containing fourteen sugars, including two GlcNAcs, nine mannoses and three glucoses. Once assembled, the oligosaccharide is transferred from the lipid to nascent proteins by oligosaccharyltransferases. In the lumen of the endoplasmic reticulum, catalyzes the addition of the seventh and ninth alpha-1,2-linked mannose residues to Man(6)GlcNAc(2)-PP-dolichol and Man(8)GlcNAc(2)-PP-dolichol respectively. This chain is Alpha-1,2-mannosyltransferase ALG9 (ALG9), found in Saccharomyces cerevisiae (strain ATCC 204508 / S288c) (Baker's yeast).